The primary structure comprises 495 residues: Lysine--tRNA ligase (495 aa).

2 residues coordinate Mg(2+): Glu-406 and Glu-413.

It belongs to the class-II aminoacyl-tRNA synthetase family. As to quaternary structure, homodimer. It depends on Mg(2+) as a cofactor.

The protein localises to the cytoplasm. The catalysed reaction is tRNA(Lys) + L-lysine + ATP = L-lysyl-tRNA(Lys) + AMP + diphosphate. The protein is Lysine--tRNA ligase of Staphylococcus aureus (strain MRSA252).